The following is a 349-amino-acid chain: UDP-N-acetylenolpyruvoylglucosamine reductase (349 aa).

The 173-residue stretch at 25–197 folds into the FAD-binding PCMH-type domain; it reads GIAATARYAA…VAVTFRLPKR (173 aa). Arg-173 is an active-site residue. The Proton donor role is filled by Ser-249. Residue Glu-345 is part of the active site.

Belongs to the MurB family. Requires FAD as cofactor.

The protein resides in the cytoplasm. The enzyme catalyses UDP-N-acetyl-alpha-D-muramate + NADP(+) = UDP-N-acetyl-3-O-(1-carboxyvinyl)-alpha-D-glucosamine + NADPH + H(+). It functions in the pathway cell wall biogenesis; peptidoglycan biosynthesis. In terms of biological role, cell wall formation. This is UDP-N-acetylenolpyruvoylglucosamine reductase from Burkholderia vietnamiensis (strain G4 / LMG 22486) (Burkholderia cepacia (strain R1808)).